We begin with the raw amino-acid sequence, 162 residues long: Ecotin (162 aa).

The signal sequence occupies residues 1 to 18 (MFVPAVVFAALASTSAWA). An intrachain disulfide couples cysteine 70 to cysteine 107.

It belongs to the protease inhibitor I11 (ecotin) family. In terms of assembly, homodimer.

It is found in the periplasm. Its function is as follows. General inhibitor of pancreatic serine proteases: inhibits chymotrypsin, trypsin, elastases, factor X, kallikrein as well as a variety of other proteases. This Salmonella choleraesuis (strain SC-B67) protein is Ecotin.